Consider the following 296-residue polypeptide: HTH-type transcriptional regulator IlvR (296 aa).

An HTH lysR-type domain is found at 1-58; that stretch reads MDIRQFRHFAAVAETLHFGRAAERLGITQPPLSQSIQALEKALGAPLFARTKRHVELT. A DNA-binding region (H-T-H motif) is located at residues 18-37; that stretch reads FGRAAERLGITQPPLSQSIQ.

The protein belongs to the LysR transcriptional regulatory family.

Its function is as follows. Positively regulates the expression of the ilvD gene while negatively autoregulating its own expression. This is HTH-type transcriptional regulator IlvR (ilvR) from Caulobacter vibrioides (strain ATCC 19089 / CIP 103742 / CB 15) (Caulobacter crescentus).